The following is a 478-amino-acid chain: Glycogen synthase (478 aa).

K15 contacts ADP-alpha-D-glucose.

This sequence belongs to the glycosyltransferase 1 family. Bacterial/plant glycogen synthase subfamily.

It carries out the reaction [(1-&gt;4)-alpha-D-glucosyl](n) + ADP-alpha-D-glucose = [(1-&gt;4)-alpha-D-glucosyl](n+1) + ADP + H(+). It functions in the pathway glycan biosynthesis; glycogen biosynthesis. Functionally, synthesizes alpha-1,4-glucan chains using ADP-glucose. The sequence is that of Glycogen synthase from Lactococcus lactis subsp. lactis (strain IL1403) (Streptococcus lactis).